Consider the following 287-residue polypeptide: Phosphatidylserine decarboxylase proenzyme (287 aa).

Catalysis depends on charge relay system; for autoendoproteolytic cleavage activity residues Asp-90, His-147, and Ser-252. Ser-252 acts as the Schiff-base intermediate with substrate; via pyruvic acid; for decarboxylase activity in catalysis. Residue Ser-252 is modified to Pyruvic acid (Ser); by autocatalysis.

Belongs to the phosphatidylserine decarboxylase family. PSD-B subfamily. Prokaryotic type I sub-subfamily. Heterodimer of a large membrane-associated beta subunit and a small pyruvoyl-containing alpha subunit. Requires pyruvate as cofactor. Is synthesized initially as an inactive proenzyme. Formation of the active enzyme involves a self-maturation process in which the active site pyruvoyl group is generated from an internal serine residue via an autocatalytic post-translational modification. Two non-identical subunits are generated from the proenzyme in this reaction, and the pyruvate is formed at the N-terminus of the alpha chain, which is derived from the carboxyl end of the proenzyme. The autoendoproteolytic cleavage occurs by a canonical serine protease mechanism, in which the side chain hydroxyl group of the serine supplies its oxygen atom to form the C-terminus of the beta chain, while the remainder of the serine residue undergoes an oxidative deamination to produce ammonia and the pyruvoyl prosthetic group on the alpha chain. During this reaction, the Ser that is part of the protease active site of the proenzyme becomes the pyruvoyl prosthetic group, which constitutes an essential element of the active site of the mature decarboxylase.

The protein localises to the cell membrane. The catalysed reaction is a 1,2-diacyl-sn-glycero-3-phospho-L-serine + H(+) = a 1,2-diacyl-sn-glycero-3-phosphoethanolamine + CO2. It participates in phospholipid metabolism; phosphatidylethanolamine biosynthesis; phosphatidylethanolamine from CDP-diacylglycerol: step 2/2. Catalyzes the formation of phosphatidylethanolamine (PtdEtn) from phosphatidylserine (PtdSer). The chain is Phosphatidylserine decarboxylase proenzyme from Pseudomonas entomophila (strain L48).